The following is a 217-amino-acid chain: MQNDLHLLEGLCRQHGIPVTKNALTLLVRYARLLEAWNLKVNLVSRKEHAPVIVKHVFHSLLIARIHDFKPGETVLDLGTGGGLPGIPLAILFPETSFLLVDSTGKKIAACKAMIKELGLENVIALHSRVEELKGVIFDTVLSRQVAPLEELCAYSARLLKHDGVLICLKGGSLNEEIAEAVLSREKHLGFPASVDQLPIGEIDPMFSEKQIVIARW.

S-adenosyl-L-methionine contacts are provided by residues G79, L84, 102–104 (DST), 130–131 (VE), and R144.

The protein belongs to the methyltransferase superfamily. RNA methyltransferase RsmG family.

Its subcellular location is the cytoplasm. Functionally, specifically methylates the N7 position of a guanine in 16S rRNA. This is Ribosomal RNA small subunit methyltransferase G from Chlorobaculum tepidum (strain ATCC 49652 / DSM 12025 / NBRC 103806 / TLS) (Chlorobium tepidum).